The primary structure comprises 299 residues: Transcription factor srbB (299 aa).

2 disordered regions span residues 1–33 and 81–204; these read MAYNNRPDASTAFTFDNDDRFVNQQPKGPDPLS and ISGF…NAAK. Residues 161–170 are compositionally biased toward low complexity; it reads PVTSQATTSP. The segment covering 188 to 199 has biased composition (polar residues); sequence RSLSTDSQTATG. Positions 203-216 are basic motif; sequence AKRAAHNIIEKRYR. In terms of domain architecture, bHLH spans 203–264; that stretch reads AKRAAHNIIE…TNAIAYMQEL (62 aa). Residues 217–264 are helix-loop-helix motif; that stretch reads TNMNAKFVALEKAMSGSGVQKPTKGGSGPASLKKSEILTNAIAYMQEL. A coiled-coil region spans residues 254–281; that stretch reads LTNAIAYMQELQDQNAALQKELALLKQN.

It localises to the nucleus. In terms of biological role, key transcription factors critical for hypoxia adaptation and virulence. Plays a major role in regulation of heme biosynthesis and carbohydrate metabolism early in the response to hypoxia. The sequence is that of Transcription factor srbB from Aspergillus fumigatus (strain ATCC MYA-4609 / CBS 101355 / FGSC A1100 / Af293) (Neosartorya fumigata).